Here is a 232-residue protein sequence, read N- to C-terminus: Aprataxin-like protein (232 aa).

In terms of domain architecture, HIT spans L38–L160. Interaction with DNA stretches follow at residues D63–K67, H138–H149, and K161–H165. Catalysis depends on H147, which acts as the Nucleophile. 2 residues coordinate Zn(2+): C200 and C203. The interaction with DNA stretch occupies residues R209–T212. Zn(2+) contacts are provided by H217 and E221.

Monomer.

The protein resides in the nucleus. It is found in the cytoplasm. The enzyme catalyses a 5'-end adenosine-5'-diphospho-5'-2'-deoxyribonucleoside-DNA + H2O = a 5'-end 5'-phospho-2'-deoxyribonucleoside-DNA + AMP + 2 H(+). It carries out the reaction a 5'-end adenosine-5'-diphospho-5'-ribonucleoside-2'-deoxyribonucleotide-DNA + H2O = a 5'-end 5'-phospho-ribonucleoside-2'-deoxyribonucleotide-DNA + AMP + 2 H(+). The catalysed reaction is a 3'-end 2'-deoxyribonucleotide-3'-diphospho-5'-guanosine-DNA + H2O = a 3'-end 2'-deoxyribonucleotide 3'-phosphate-DNA + GMP + 2 H(+). DNA-binding protein involved in single-strand DNA break repair, double-strand DNA break repair and base excision repair. Resolves abortive DNA ligation intermediates formed either at base excision sites, or when DNA ligases attempt to repair non-ligatable breaks induced by reactive oxygen species. Catalyzes the release of adenylate groups covalently linked to 5'-phosphate termini, resulting in the production of 5'-phosphate termini that can be efficiently rejoined. Likewise, catalyzes the release of 3'-linked guanosine (DNAppG) and inosine (DNAppI) from DNA, but has higher specific activity with 5'-linked adenosine (AppDNA). The sequence is that of Aprataxin-like protein (hnt3) from Schizosaccharomyces pombe (strain 972 / ATCC 24843) (Fission yeast).